An 89-amino-acid polypeptide reads, in one-letter code: Small ribosomal subunit protein uS15 (89 aa).

The protein belongs to the universal ribosomal protein uS15 family. In terms of assembly, part of the 30S ribosomal subunit. Forms a bridge to the 50S subunit in the 70S ribosome, contacting the 23S rRNA.

One of the primary rRNA binding proteins, it binds directly to 16S rRNA where it helps nucleate assembly of the platform of the 30S subunit by binding and bridging several RNA helices of the 16S rRNA. In terms of biological role, forms an intersubunit bridge (bridge B4) with the 23S rRNA of the 50S subunit in the ribosome. The chain is Small ribosomal subunit protein uS15 from Bradyrhizobium sp. (strain ORS 278).